We begin with the raw amino-acid sequence, 116 residues long: Ribosome-binding factor A (116 aa).

Belongs to the RbfA family. As to quaternary structure, monomer. Binds 30S ribosomal subunits, but not 50S ribosomal subunits or 70S ribosomes.

Its subcellular location is the cytoplasm. In terms of biological role, one of several proteins that assist in the late maturation steps of the functional core of the 30S ribosomal subunit. Associates with free 30S ribosomal subunits (but not with 30S subunits that are part of 70S ribosomes or polysomes). Required for efficient processing of 16S rRNA. May interact with the 5'-terminal helix region of 16S rRNA. The sequence is that of Ribosome-binding factor A from Buchnera aphidicola subsp. Cinara cedri (strain Cc).